A 156-amino-acid polypeptide reads, in one-letter code: uncharacterized protein (156 aa).

Residue His-55 is part of the active site.

It belongs to the thioester dehydratase family. FabZ subfamily.

This is an uncharacterized protein from Halalkalibacterium halodurans (strain ATCC BAA-125 / DSM 18197 / FERM 7344 / JCM 9153 / C-125) (Bacillus halodurans).